We begin with the raw amino-acid sequence, 186 residues long: Elongation factor P (186 aa).

This sequence belongs to the elongation factor P family.

The protein localises to the cytoplasm. It participates in protein biosynthesis; polypeptide chain elongation. In terms of biological role, involved in peptide bond synthesis. Stimulates efficient translation and peptide-bond synthesis on native or reconstituted 70S ribosomes in vitro. Probably functions indirectly by altering the affinity of the ribosome for aminoacyl-tRNA, thus increasing their reactivity as acceptors for peptidyl transferase. The sequence is that of Elongation factor P from Neisseria gonorrhoeae (strain ATCC 700825 / FA 1090).